The following is a 473-amino-acid chain: Reticulon-4 receptor (473 aa).

Residues 1-26 (MKRASAGGSRLLAWVLWLQAWQVAAP) form the signal peptide. Disulfide bonds link Cys-27–Cys-33 and Cys-31–Cys-43. The 28-residue stretch at 27-54 (CPGACVCYNEPKVTTSCPQQGLQAVPVG) folds into the LRRNT domain. LRR repeat units lie at residues 55–79 (IPAA…SFRA), 81–103 (RNLT…AFTG), 104–128 (LALL…TFHG), 129–152 (LGRL…LFRG), 153–176 (LAAL…TFRD), 178–200 (GNLT…AFRG), 202–224 (HSLD…AFRD), 225–248 (LGRL…ALAP), and 250–273 (RALQ…PLWA). A glycan (N-linked (GlcNAc...) asparagine) is linked at Asn-82. N-linked (GlcNAc...) asparagine glycosylation is present at Asn-179. In terms of domain architecture, LRRCT spans 260–310 (NPWVCDCRARPLWAWLQKFRGSSSEVPCSLPQRLAGRDLKRLAANDLQGCA). 3 cysteine pairs are disulfide-bonded: Cys-264/Cys-287, Cys-266/Cys-335, and Cys-309/Cys-336. Residues 346–447 (VLEPGRPASA…GGGTGDSEGS (102 aa)) are disordered. The segment covering 413 to 429 (PRRRPGCSRKNRTRSHC) has biased composition (basic residues). Gly residues predominate over residues 434–445 (AGSGGGGTGDSE). Ser-447 is lipidated: GPI-anchor amidated serine. Positions 448–473 (GALPSLTCSLTPLGLALVLWTVLGPC) are cleaved as a propeptide — removed in mature form.

This sequence belongs to the Nogo receptor family. In terms of assembly, homodimer. Interacts with MAG. Interacts with RTN4. Interacts with NGFR. Interacts with LINGO1. Interacts with KIAA0319L. Interacts with OLFM1; this inhibits interaction with LINGO1 and NGFR. Interacts with OMG. Post-translationally, N-glycosylated. O-glycosylated. Contains terminal sialic acid groups on its glycan chains. Widespread in the brain but highest levels in the gray matter. Low levels in heart and kidney; not expressed in oligodendrocytes (white matter).

It is found in the cell membrane. Its subcellular location is the membrane raft. It localises to the cell projection. The protein localises to the dendrite. The protein resides in the axon. It is found in the perikaryon. Functionally, receptor for RTN4, OMG and MAG. Functions as a receptor for the sialylated gangliosides GT1b and GM1. Besides, functions as a receptor for chondroitin sulfate proteoglycans. Can also bind heparin. Intracellular signaling cascades are triggered via the coreceptor NGFR. Signaling mediates activation of Rho and downstream reorganization of the actin cytoskeleton. Mediates axonal growth inhibition. Plays a role in regulating axon regeneration and neuronal plasticity in the adult central nervous system. Plays a role in postnatal brain development. Required for normal axon migration across the brain midline and normal formation of the corpus callosum. Protects motoneurons against apoptosis; protection against apoptosis is probably mediated via interaction with MAG. Acts in conjunction with RTN4 and LINGO1 in regulating neuronal precursor cell motility during cortical development. Like other family members, plays a role in restricting the number dendritic spines and the number of synapses that are formed during brain development. In Homo sapiens (Human), this protein is Reticulon-4 receptor (RTN4R).